We begin with the raw amino-acid sequence, 145 residues long: Ribonuclease VapC7 (145 aa).

The PINc domain occupies 2 to 129 (IVLDTTVLVY…PAFADLSDVV (128 aa)). Mg(2+) is bound by residues aspartate 5 and aspartate 100.

Belongs to the PINc/VapC protein family. It depends on Mg(2+) as a cofactor.

Its function is as follows. Toxic component of a type II toxin-antitoxin (TA) system. An RNase. The cognate antitoxin is VapB7. The chain is Ribonuclease VapC7 from Mycobacterium tuberculosis (strain ATCC 25618 / H37Rv).